A 242-amino-acid chain; its full sequence is Ubiquinone biosynthesis O-methyltransferase (242 aa).

Positions 44, 64, 85, and 129 each coordinate S-adenosyl-L-methionine.

It belongs to the methyltransferase superfamily. UbiG/COQ3 family.

The catalysed reaction is a 3-demethylubiquinol + S-adenosyl-L-methionine = a ubiquinol + S-adenosyl-L-homocysteine + H(+). The enzyme catalyses a 3-(all-trans-polyprenyl)benzene-1,2-diol + S-adenosyl-L-methionine = a 2-methoxy-6-(all-trans-polyprenyl)phenol + S-adenosyl-L-homocysteine + H(+). Its pathway is cofactor biosynthesis; ubiquinone biosynthesis. Its function is as follows. O-methyltransferase that catalyzes the 2 O-methylation steps in the ubiquinone biosynthetic pathway. This Salmonella typhi protein is Ubiquinone biosynthesis O-methyltransferase.